A 163-amino-acid chain; its full sequence is Ribonuclease P protein subunit p25-like protein (163 aa).

Disordered stretches follow at residues 1-22 (MEHYRKAGSVELPAPSPMPQLP) and 129-163 (NEYGYQPPGAPPDLGPTPASSCGPQPRRRARDTRF). A compositionally biased stretch (basic residues) spans 154–163 (PRRRARDTRF).

This sequence belongs to the histone-like Alba family.

Its subcellular location is the nucleus. Functionally, may be a component of ribonuclease P or MRP. The chain is Ribonuclease P protein subunit p25-like protein (RPP25L) from Bos taurus (Bovine).